The primary structure comprises 491 residues: Probable glycine dehydrogenase (decarboxylating) subunit 2 (491 aa).

At K264 the chain carries N6-(pyridoxal phosphate)lysine.

It belongs to the GcvP family. C-terminal subunit subfamily. In terms of assembly, the glycine cleavage system is composed of four proteins: P, T, L and H. In this organism, the P 'protein' is a heterodimer of two subunits. The cofactor is pyridoxal 5'-phosphate.

The catalysed reaction is N(6)-[(R)-lipoyl]-L-lysyl-[glycine-cleavage complex H protein] + glycine + H(+) = N(6)-[(R)-S(8)-aminomethyldihydrolipoyl]-L-lysyl-[glycine-cleavage complex H protein] + CO2. In terms of biological role, the glycine cleavage system catalyzes the degradation of glycine. The P protein binds the alpha-amino group of glycine through its pyridoxal phosphate cofactor; CO(2) is released and the remaining methylamine moiety is then transferred to the lipoamide cofactor of the H protein. The protein is Probable glycine dehydrogenase (decarboxylating) subunit 2 of Coxiella burnetii (strain CbuG_Q212) (Coxiella burnetii (strain Q212)).